Reading from the N-terminus, the 145-residue chain is Galectin-5 (145 aa).

Serine 2 carries the post-translational modification N-acetylserine. In terms of domain architecture, Galectin spans 17-145 (FFTSIPNGLY…GDIQLTHVET (129 aa)). 77–83 (WGPEERS) contacts a beta-D-galactoside.

Monomer. In terms of tissue distribution, erythrocytes.

Its function is as follows. May function in erythrocyte differentiation. In Rattus norvegicus (Rat), this protein is Galectin-5 (Lgals5).